Consider the following 360-residue polypeptide: UDP-arabinopyranose mutase 2 (360 aa).

Valine 2 carries the N-acetylvaline modification. The DXD motif signature appears at 110–112; sequence DDD. N-linked (Glc...) arginine glycosylation is present at arginine 158.

It belongs to the RGP family. Heteromers with RGP1, RGP4 and RGP5. It depends on Mn(2+) as a cofactor. Mg(2+) is required as a cofactor. Post-translationally, reversibly glycosylated in vitro by UDP-glucose, UDP-xylose and UDP-galactose, but not UDP-mannose. Predominantly expressed in shoot and root apical meristems. Expressed in epidermal cells of leaves, inflorescence stems and seed coat. Expressed in pollen.

The protein localises to the cytoplasm. Its subcellular location is the cytosol. It is found in the golgi apparatus. It catalyses the reaction UDP-beta-L-arabinofuranose = UDP-beta-L-arabinopyranose. UDP-L-arabinose mutase involved in the biosynthesis of cell wall non-cellulosic polysaccharides. Catalyzes the interconvertion of UDP-L-arabinopyranose (UDP-Arap) and UDP-L-arabinofuranose (UDP-Araf) in vitro. Preferentially catalyzes the formation of UDP-Arap from UDP-Araf. At thermodynamic equilibrium in vitro the ratio of the pyranose form over the furanose form is 95:5. Is not active on other UDP-sugars (UDP-Gal, UDP-Xyl, UDP-Glc, GDP-Man and GDP-Fuc). Functions redundantly with RGP2 and is essential for proper cell walls and pollen development. Probably involved in the formation of the pectocellulosic cell wall layer intine. Is probably active as heteromer in vivo. The chain is UDP-arabinopyranose mutase 2 from Arabidopsis thaliana (Mouse-ear cress).